The following is a 189-amino-acid chain: B3 domain-containing protein At2g32645 (189 aa).

Residues 33–133 (FNQVKTPDFL…KLCFALTPKI (101 aa)) constitute a DNA-binding region (TF-B3).

The protein localises to the nucleus. The chain is B3 domain-containing protein At2g32645 from Arabidopsis thaliana (Mouse-ear cress).